We begin with the raw amino-acid sequence, 435 residues long: Methylenetetrahydrofolate--tRNA-(uracil-5-)-methyltransferase TrmFO (435 aa).

9 to 14 (GAGLAG) serves as a coordination point for FAD.

It belongs to the MnmG family. TrmFO subfamily. FAD is required as a cofactor.

The protein localises to the cytoplasm. It carries out the reaction uridine(54) in tRNA + (6R)-5,10-methylene-5,6,7,8-tetrahydrofolate + NADH + H(+) = 5-methyluridine(54) in tRNA + (6S)-5,6,7,8-tetrahydrofolate + NAD(+). It catalyses the reaction uridine(54) in tRNA + (6R)-5,10-methylene-5,6,7,8-tetrahydrofolate + NADPH + H(+) = 5-methyluridine(54) in tRNA + (6S)-5,6,7,8-tetrahydrofolate + NADP(+). Catalyzes the folate-dependent formation of 5-methyl-uridine at position 54 (M-5-U54) in all tRNAs. In Staphylococcus aureus (strain JH1), this protein is Methylenetetrahydrofolate--tRNA-(uracil-5-)-methyltransferase TrmFO.